The sequence spans 151 residues: MTENAQPMFSIEKIYIKDLSLEVPNAPKIFLERDTPQISVQLRTEGNTVDEGLYEVTLTVTVSATLGEDRSVFLVEVAQAGVFQIRNVPPAELEPVMMIGCPNILFPYAREAVSAAVSRAGFQPIVLAPVNFEALYQQQQAAKEGGDVAIQ.

It belongs to the SecB family. In terms of assembly, homotetramer, a dimer of dimers. One homotetramer interacts with 1 SecA dimer.

It localises to the cytoplasm. Its function is as follows. One of the proteins required for the normal export of preproteins out of the cell cytoplasm. It is a molecular chaperone that binds to a subset of precursor proteins, maintaining them in a translocation-competent state. It also specifically binds to its receptor SecA. This chain is Protein-export protein SecB, found in Azoarcus sp. (strain BH72).